The primary structure comprises 544 residues: Cytochrome P450 monooxygenase cle2 (544 aa).

The helical transmembrane segment at 19–39 (LGLLIGLSLILSITWTAYTIL) threads the bilayer. The disordered stretch occupies residues 273–305 (RTQQVEQSIEKNTKNEKKEDEDEDQNEDEETPG). The span at 280-290 (SIEKNTKNEKK) shows a compositional bias: basic and acidic residues. The segment covering 291–304 (EDEDEDQNEDEETP) has biased composition (acidic residues). Cys-478 is a binding site for heme.

Belongs to the cytochrome P450 family. Requires heme as cofactor.

The protein localises to the membrane. It functions in the pathway secondary metabolite biosynthesis; terpenoid biosynthesis. In terms of biological role, cytochrome P450 monooxygenase; part of the cluster A that mediates the biosynthesis of chevalone E and its oxidized derivatives that possess a unique five-membered lactone ring and can synergistically enhance the cytotoxicity of doxorubicin (DOX) in breast cancer cells. Within the pathway, cle2 is involved in hydroxylation of the chavalone E scaffold at position C-20 and contributes with cle4 to the production of seven oxidation derivatives. The molecular scaffold is commonly biosynthesized by a series of enzymes including the non-reducing polyketide synthase (NR-PKS) cle1 that produces the alpha-pyrone triacetic acid lactone (TAL); The membrane-bound prenyltransferase cle5 that accepts TAL as its substrate to perform a C-3 geranylgeranylation reaction, in which the pathway-dedicated GGPS cle6 is required to provide GGPP, the other substrate of cle5; the FAD-dependent monooxygenase Cle3 that forms an (S)-epoxide ring at the terminal olefin of the geranylgeranyl group; and the terpene cyclase Cle7 that catalyzes the cyclization of the prenyl group that yields the pentacyclic pathway intermediate chevalone E. Chevalone E can derivatize into seven new oxidized analogs by the cytochrome P450 monooxygenases cle2 (acting at C-20) and cle4 (acting at C-11 and C-12). The protein is Cytochrome P450 monooxygenase cle2 of Aspergillus versicolor.